The sequence spans 147 residues: Large ribosomal subunit protein uL15 (147 aa).

Positions 1 to 54 (MRLSDIKPTPGSMKKRTRVGRGIGSGKGKTSGKGHKGQKARGRGKVHPWFEGGQ) are disordered. Over residues 30 to 46 (TSGKGHKGQKARGRGKV) the composition is skewed to basic residues.

Belongs to the universal ribosomal protein uL15 family. Part of the 50S ribosomal subunit.

Its function is as follows. Binds to the 23S rRNA. The protein is Large ribosomal subunit protein uL15 of Thermosipho melanesiensis (strain DSM 12029 / CIP 104789 / BI429).